Reading from the N-terminus, the 338-residue chain is Tryptophan--tRNA ligase (338 aa).

Residues 11-13 (QPS) and 19-20 (GN) contribute to the ATP site. Residues 12–20 (PSGELSIGN) carry the 'HIGH' region motif. Aspartate 135 lines the L-tryptophan pocket. Residues 147–149 (GSD), valine 189, and 198–202 (KMSKS) each bind ATP. The 'KMSKS' region motif lies at 198–202 (KMSKS).

Belongs to the class-I aminoacyl-tRNA synthetase family. As to quaternary structure, homodimer.

Its subcellular location is the cytoplasm. It catalyses the reaction tRNA(Trp) + L-tryptophan + ATP = L-tryptophyl-tRNA(Trp) + AMP + diphosphate + H(+). Its function is as follows. Catalyzes the attachment of tryptophan to tRNA(Trp). The sequence is that of Tryptophan--tRNA ligase from Vibrio vulnificus (strain CMCP6).